Reading from the N-terminus, the 119-residue chain is Large ribosomal subunit protein uL18 (119 aa).

The protein belongs to the universal ribosomal protein uL18 family. As to quaternary structure, part of the 50S ribosomal subunit; part of the 5S rRNA/L5/L18/L25 subcomplex. Contacts the 5S and 23S rRNAs.

Its function is as follows. This is one of the proteins that bind and probably mediate the attachment of the 5S RNA into the large ribosomal subunit, where it forms part of the central protuberance. The polypeptide is Large ribosomal subunit protein uL18 (Oceanobacillus iheyensis (strain DSM 14371 / CIP 107618 / JCM 11309 / KCTC 3954 / HTE831)).